A 488-amino-acid polypeptide reads, in one-letter code: Germacrene A acid 8-beta-hydroxylase (488 aa).

A helical; Signal-anchor for type II membrane protein membrane pass occupies residues 2-22; it reads ELFTIFSIVVSSLILFTFWSL. N-linked (GlcNAc...) asparagine glycosylation is present at N407. Position 429 (C429) interacts with heme.

The protein belongs to the cytochrome P450 family. Heme serves as cofactor. Expressed in leaf primordia.

Its subcellular location is the membrane. The enzyme catalyses germacra-1(10),4,11(13)-trien-12-oate + reduced [NADPH--hemoprotein reductase] + O2 = 8beta-hydroxygermacra-1(10),4,11(13)-trien-12-oate + oxidized [NADPH--hemoprotein reductase] + H2O + H(+). The protein operates within secondary metabolite biosynthesis; terpenoid biosynthesis. Functionally, involved in the biosynthesis of germacrene-derived sesquiterpene lactones. Hydroxylates germacrene A acid to 8-beta-hydroxy-germacrene A acid. Unlike 6-alpha-hydroxy-germacrene A acid, this compound cannot undergo spontaneous lactonization. The sequence is that of Germacrene A acid 8-beta-hydroxylase from Helianthus annuus (Common sunflower).